The following is a 362-amino-acid chain: MTIEIHDLSKQFGSFTALNDINLKVNPGELLALLGPSGSGKTTLLRVIAGLETADSGQVLFNEEDSTDKHIRDRHVGFVFQHYALFRNMTIFENVAFGLRVRPRKQRPNAPEINHRVTELLQLVQLDWLADRYPHQLSGGQRQRIALARALAVEPSVLLLDEPFGALDAKVRKELRAWLRKLHDDMHITSVFVTHDQEEALEVADRIVVMNRGRIEQIGTPDEVYEKPANPFVYEFLGHVNLFHGRVHQGHAWIGDLEVDAPEYSEAEDLSAIAYVRPHDIEVDRTLNGEPALAAHIVHILAIGPVVRLELAGKDNQSTNSIYAEISKERFRELQLARGDQVFIKPRKLDLFPNHAQNGSIH.

The ABC transporter domain maps to 3 to 237 (IEIHDLSKQF…PANPFVYEFL (235 aa)). 35-42 (GPSGSGKT) serves as a coordination point for ATP.

The protein belongs to the ABC transporter superfamily. Sulfate/tungstate importer (TC 3.A.1.6) family. As to quaternary structure, the complex is composed of two ATP-binding proteins (CysA), two transmembrane proteins (CysT and CysW) and a solute-binding protein (CysP).

It is found in the cell inner membrane. It carries out the reaction sulfate(out) + ATP + H2O = sulfate(in) + ADP + phosphate + H(+). The enzyme catalyses thiosulfate(out) + ATP + H2O = thiosulfate(in) + ADP + phosphate + H(+). Part of the ABC transporter complex CysAWTP involved in sulfate/thiosulfate import. Responsible for energy coupling to the transport system. This Nitrosomonas europaea (strain ATCC 19718 / CIP 103999 / KCTC 2705 / NBRC 14298) protein is Sulfate/thiosulfate import ATP-binding protein CysA.